We begin with the raw amino-acid sequence, 859 residues long: DNA mismatch repair protein MutS (859 aa).

An ATP-binding site is contributed by glycine 622 to serine 629.

It belongs to the DNA mismatch repair MutS family.

This protein is involved in the repair of mismatches in DNA. It is possible that it carries out the mismatch recognition step. This protein has a weak ATPase activity. This Coxiella burnetii (strain RSA 493 / Nine Mile phase I) protein is DNA mismatch repair protein MutS.